The chain runs to 645 residues: Sister chromatid cohesion protein 1 (645 aa).

3 disordered regions span residues 292–311, 495–527, and 619–645; these read FEPE…FALE, QSGF…GQLE, and CPLS…MRPV.

It belongs to the rad21 family. In terms of assembly, component of the cohesin complex, composed of the smc-1 and smc-3 heterodimer attached via their hinge domain, scc-1 which links them, and scc-3. Interacts with smc-1, smc-3, scc-3 and tim-1.

It is found in the nucleus. Its subcellular location is the chromosome. The protein localises to the cytoplasm. Functionally, cleavable component of the cohesin complex involved in chromosome cohesion during cell cycle. The cohesin complex is required for the cohesion of sister chromatids after DNA replication. The cohesin complex apparently forms a large proteinaceous ring within which sister chromatids can be trapped. At metaphase-anaphase transition, this protein is cleaved and dissociates from chromatin, allowing sister chromatids to segregate. This is Sister chromatid cohesion protein 1 from Caenorhabditis elegans.